A 235-amino-acid chain; its full sequence is Voltage-gated hydrogen channel 1 (235 aa).

The Cytoplasmic portion of the chain corresponds to 1–65 (MSRYLKHFTA…SLRKLYSTER (65 aa)). A helical membrane pass occupies residues 66–86 (FQIVVVCLVVLDAIFVLCELL). The Extracellular segment spans residues 87–103 (IDLSIIEADHHRIAPQV). The chain crosses the membrane as a helical span at residues 104-126 (FHYLSLALLTFFMVELAGKIFAY). The Cytoplasmic segment spans residues 127–134 (RLEFLHHK). The helical transmembrane segment at 135–155 (FEVFDGIVVVVSFILDIIYIS) threads the bilayer. At 156–162 (KEDAFDA) the chain is on the extracellular side. A helical transmembrane segment spans residues 163-183 (MGLLILLRLWRVARIINGILV). Residues 184–235 (SVQNRANHRVEKLKEINESLVHQVNELKEQNTKMDQENVRLRALLKDHSIDF) lie on the Cytoplasmic side of the membrane. Residues 187–231 (NRANHRVEKLKEINESLVHQVNELKEQNTKMDQENVRLRALLKDH) adopt a coiled-coil conformation.

The protein belongs to the hydrogen channel family. As to quaternary structure, homodimer.

Its subcellular location is the membrane. The protein resides in the cell membrane. Functionally, mediates the voltage-dependent proton permeability of excitable membranes. Forms a proton-selective channel through which protons may pass in accordance with their electrochemical gradient. The polypeptide is Voltage-gated hydrogen channel 1 (hvcn1) (Danio rerio (Zebrafish)).